A 433-amino-acid chain; its full sequence is Mblk-1-related factor 1 (433 aa).

The HTH psq-type 1 domain maps to 145-197 (NKSNILRRNYTVEDLTQAVEDIRQGKLGTRRASVVYGIPRSTLRNKIYKLEAE). Residues 173–193 (TRRASVVYGIPRSTLRNKIYK) constitute a DNA-binding region (H-T-H motif). Positions 235 to 254 (GNQSDSSSSSPHASMCPSSP) are enriched in low complexity. Disordered stretches follow at residues 235 to 278 (GNQS…SCSP) and 304 to 338 (ANIS…PKRG). Residues 304–319 (ANISNVDTHTPTPISE) show a composition bias toward polar residues. Over residues 320-332 (KSQKMHGNEEWKR) the composition is skewed to basic and acidic residues. The HTH psq-type 2 domain occupies 334 to 386 (RPKRGQYRKYDKNALDEAVRSVRRGEMTVHRAGSFFGVPHSTLEYKVKERNLM). Positions 362 to 382 (VHRAGSFFGVPHSTLEYKVKE) form a DNA-binding region, H-T-H motif. Residues 393–433 (LYSHDSSTSEDGSQLVTSTISEKSDSSSHTSTPIPFPISLV) are disordered. Over residues 396–408 (HDSSTSEDGSQLV) the composition is skewed to polar residues. The span at 409–424 (TSTISEKSDSSSHTST) shows a compositional bias: low complexity.

As to expression, expressed in AIM, RIC, AIZ, ADF, ADL, ASK, AWA, AUA, AIN, RIH (or RIR) and RIF head neurons and, in PVP, PVQ and DVA (or DVC) tail neurons, some intestinal cells, somatic gonad and vulva.

The protein localises to the nucleus. In terms of biological role, may act as transcription activator. Plays a role in neurogenesis by regulating neurite pruning between left and right AIM neurons and left and right RIF neurons during larval development. Regulates olfactory plasticity. In Caenorhabditis elegans, this protein is Mblk-1-related factor 1.